The following is an 882-amino-acid chain: Alanine--tRNA ligase (882 aa).

Residues histidine 571, histidine 575, cysteine 673, and histidine 677 each contribute to the Zn(2+) site.

It belongs to the class-II aminoacyl-tRNA synthetase family. Zn(2+) is required as a cofactor.

Its subcellular location is the cytoplasm. It carries out the reaction tRNA(Ala) + L-alanine + ATP = L-alanyl-tRNA(Ala) + AMP + diphosphate. Its function is as follows. Catalyzes the attachment of alanine to tRNA(Ala) in a two-step reaction: alanine is first activated by ATP to form Ala-AMP and then transferred to the acceptor end of tRNA(Ala). Also edits incorrectly charged Ser-tRNA(Ala) and Gly-tRNA(Ala) via its editing domain. The chain is Alanine--tRNA ligase from Desulfotalea psychrophila (strain LSv54 / DSM 12343).